The primary structure comprises 287 residues: Protease HtpX (287 aa).

The next 2 helical transmembrane spans lie at isoleucine 4–isoleucine 24 and glycine 33–isoleucine 53. Histidine 139 lines the Zn(2+) pocket. The active site involves glutamate 140. Histidine 143 provides a ligand contact to Zn(2+). Helical transmembrane passes span leucine 154–isoleucine 174 and alanine 195–phenylalanine 215. A Zn(2+)-binding site is contributed by glutamate 220.

This sequence belongs to the peptidase M48B family. Zn(2+) serves as cofactor.

The protein resides in the cell inner membrane. The sequence is that of Protease HtpX from Shewanella pealeana (strain ATCC 700345 / ANG-SQ1).